The chain runs to 261 residues: MNSTQRFEHKVVIVTGAAQGIGRGVALRIAQEGGCLILADRSDLIQAVLAEIKALGALAIAVETDLETYAGAELVVSHAIAEYGRIDVLINNVGGAIWMKPFQEFSEEEIIQEVHRSLFPALWCCRAVLPEMLKHQQGTIVNVSSIATRGIHRIPYSASKGGVNALTASLAFEHAQHGIRVNAVATGGTKAPPRKIPRNAQPLSKSEQVWMQQVVDQTIDRSFLGRYGSIDEQVNAITFLASDESSYITGSVLPVGGGDQG.

13–37 (IVTGAAQGIGRGVALRIAQEGGCLI) serves as a coordination point for NAD(+). Ser-145 is a binding site for substrate. Tyr-156 serves as the catalytic Proton acceptor.

It belongs to the short-chain dehydrogenases/reductases (SDR) family. As to quaternary structure, homodimer.

It catalyses the reaction (1R,6S)-1,6-dihydroxycyclohexa-2,4-diene-1-carboxylate + NAD(+) = catechol + CO2 + NADH. It functions in the pathway aromatic compound metabolism; benzoate degradation via hydroxylation; catechol from benzoate: step 2/2. Functionally, degradation of 2-hydro-1,2-dihydroxy benzoate (DHB) to catechol. The sequence is that of 1,6-dihydroxycyclohexa-2,4-diene-1-carboxylate dehydrogenase (benD) from Acinetobacter baylyi (strain ATCC 33305 / BD413 / ADP1).